A 623-amino-acid chain; its full sequence is tRNA uridine 5-carboxymethylaminomethyl modification enzyme MnmG (623 aa).

12-17 is an FAD binding site; that stretch reads GAGHAG. 272–286 contributes to the NAD(+) binding site; sequence GPRYCPSIEDKINRF.

It belongs to the MnmG family. In terms of assembly, homodimer. Heterotetramer of two MnmE and two MnmG subunits. Requires FAD as cofactor.

It localises to the cytoplasm. Its function is as follows. NAD-binding protein involved in the addition of a carboxymethylaminomethyl (cmnm) group at the wobble position (U34) of certain tRNAs, forming tRNA-cmnm(5)s(2)U34. This chain is tRNA uridine 5-carboxymethylaminomethyl modification enzyme MnmG, found in Flavobacterium johnsoniae (strain ATCC 17061 / DSM 2064 / JCM 8514 / BCRC 14874 / CCUG 350202 / NBRC 14942 / NCIMB 11054 / UW101) (Cytophaga johnsonae).